We begin with the raw amino-acid sequence, 2283 residues long: Serine-rich adhesin for platelets (2283 aa).

Residues 1 to 89 (MSKRQKAFHD…VNMLHDQQAF (89 aa)) form the signal peptide. Residues 90-230 (AASDAPLTSE…KTSTTSTSTA (141 aa)) form a serine-rich repeat region 1, SRR1 region. Residues 100-111 (LNTQSETVGNQN) show a composition bias toward polar residues. Disordered stretches follow at residues 100–230 (LNTQ…TSTA), 691–721 (NSGNAVTNKSTGLPSGLTFDSTNNTISGTPT), and 751–2255 (NSMS…GLLG). The span at 112–128 (STTIEASTSTADSTSVT) shows a compositional bias: low complexity. The segment covering 129-140 (KNSSSVQTSNSD) has biased composition (polar residues). A compositionally biased stretch (low complexity) spans 149–229 (NVTSTTNSTS…NKTSTTSTST (81 aa)). Residues 231–751 (PVKLRTFSRL…TTFKYEVTRN (521 aa)) are non-repeat region (NRR). Composition is skewed to low complexity over residues 752 to 1323 (SMSD…SDSI), 1330 to 1894 (SLSA…QSSS), and 1901 to 2225 (DSMS…SATS). Residues 752 to 2244 (SMSDSVSTSG…AQSEERLPDT (1493 aa)) form a serine-rich repeat region 2, SRR2 region. The LPXTG sorting signal motif lies at 2241–2245 (LPDTG). Pentaglycyl murein peptidoglycan amidated threonine is present on Thr2244. A propeptide spans 2245–2283 (GESIKQNGLLGGIMTLLVGLGLMKRKKKKDENDQDDSQA) (removed by sortase).

It belongs to the serine-rich repeat protein (SRRP) family. Proteolytically cleaved by a metalloprotease. In terms of processing, glycosylated. It is probable that most of the Ser residues in SSR1 and SSR2 are O-GlcNAcylated. Sequential glycosylation by sugar transferases are able to generate complex sugar polymorphisms.

The protein localises to the secreted. The protein resides in the cell wall. Mediates binding to human platelets, possibly through a receptor-ligand interaction. Probably associated with virulence in endovascular infection. The chain is Serine-rich adhesin for platelets (sraP) from Staphylococcus aureus.